The sequence spans 242 residues: Ribonuclease PH (242 aa).

Phosphate contacts are provided by residues Arg87 and 125-127; that span reads GTR.

Belongs to the RNase PH family. Homohexameric ring arranged as a trimer of dimers.

The catalysed reaction is tRNA(n+1) + phosphate = tRNA(n) + a ribonucleoside 5'-diphosphate. Phosphorolytic 3'-5' exoribonuclease that plays an important role in tRNA 3'-end maturation. Removes nucleotide residues following the 3'-CCA terminus of tRNAs; can also add nucleotides to the ends of RNA molecules by using nucleoside diphosphates as substrates, but this may not be physiologically important. Probably plays a role in initiation of 16S rRNA degradation (leading to ribosome degradation) during starvation. This chain is Ribonuclease PH, found in Thermosynechococcus vestitus (strain NIES-2133 / IAM M-273 / BP-1).